A 177-amino-acid polypeptide reads, in one-letter code: Negative modulator of initiation of replication (177 aa).

It belongs to the SeqA family. Homodimer. Polymerizes to form helical filaments.

The protein resides in the cytoplasm. Negative regulator of replication initiation, which contributes to regulation of DNA replication and ensures that replication initiation occurs exactly once per chromosome per cell cycle. Binds to pairs of hemimethylated GATC sequences in the oriC region, thus preventing assembly of replication proteins and re-initiation at newly replicated origins. Repression is relieved when the region becomes fully methylated. This is Negative modulator of initiation of replication from Vibrio cholerae serotype O1 (strain ATCC 39315 / El Tor Inaba N16961).